The following is a 148-amino-acid chain: Glutamyl-tRNA(Gln) amidotransferase subunit C, mitochondrial (148 aa).

A mitochondrion-targeting transit peptide spans 1 to 10; it reads MLRLLNKRFY.

It belongs to the GatC family. Subunit of the heterotrimeric GatCAB amidotransferase (AdT) complex, composed of A, B and C subunits.

It is found in the mitochondrion. The enzyme catalyses L-glutamyl-tRNA(Gln) + L-glutamine + ATP + H2O = L-glutaminyl-tRNA(Gln) + L-glutamate + ADP + phosphate + H(+). In terms of biological role, allows the formation of correctly charged Gln-tRNA(Gln) through the transamidation of misacylated Glu-tRNA(Gln) in the mitochondria. The reaction takes place in the presence of glutamine and ATP through an activated gamma-phospho-Glu-tRNA(Gln). This is Glutamyl-tRNA(Gln) amidotransferase subunit C, mitochondrial from Drosophila ananassae (Fruit fly).